The primary structure comprises 306 residues: Putative HPr kinase/phosphorylase 2 (306 aa).

Active-site residues include H138 and K159. ATP is bound at residue 153 to 160; that stretch reads GESGVGKS. S160 is a binding site for Mg(2+). D177 (proton acceptor; for phosphorylation activity. Proton donor; for dephosphorylation activity) is an active-site residue. The tract at residues 201–210 is important for the catalytic mechanism of both phosphorylation and dephosphorylation; it reads LALRSVGLLN. The important for the catalytic mechanism of dephosphorylation stretch occupies residues 264–269; it reads QLQPGR.

Belongs to the HPrK/P family. In terms of assembly, homohexamer. The cofactor is Mg(2+).

The catalysed reaction is [HPr protein]-L-serine + ATP = [HPr protein]-O-phospho-L-serine + ADP + H(+). It catalyses the reaction [HPr protein]-O-phospho-L-serine + phosphate + H(+) = [HPr protein]-L-serine + diphosphate. Catalyzes the ATP- as well as the pyrophosphate-dependent phosphorylation of a specific serine residue in HPr, a phosphocarrier protein of the phosphoenolpyruvate-dependent sugar phosphotransferase system (PTS). HprK/P also catalyzes the pyrophosphate-producing, inorganic phosphate-dependent dephosphorylation (phosphorolysis) of seryl-phosphorylated HPr (P-Ser-HPr). The two antagonistic activities of HprK/P are regulated by several intracellular metabolites, which change their concentration in response to the absence or presence of rapidly metabolisable carbon sources (glucose, fructose, etc.) in the growth medium. Also phosphorylates/dephosphorylates the HPr-like catabolite repression protein crh on a specific serine residue. Therefore, by controlling the phosphorylation state of HPr and crh, HPrK/P is a sensor enzyme that plays a major role in the regulation of carbon metabolism and sugar transport: it mediates carbon catabolite repression (CCR), and regulates PTS-catalyzed carbohydrate uptake and inducer exclusion. In Oceanobacillus iheyensis (strain DSM 14371 / CIP 107618 / JCM 11309 / KCTC 3954 / HTE831), this protein is Putative HPr kinase/phosphorylase 2 (hprK2).